A 491-amino-acid chain; its full sequence is MSTQWEVVIGLETHAQLSTVSKIFSGASTQFGAEPNTQACPVDLALPGVLPVLNRGAVERAIRFGLAIGATIAPRSIFARKNYFYPDLPKGYQISQYEIPVVQGGAITIQVPANEKAGKPAYEKTVNLTRAHLEEDAGKSLHEDFAGMTGIDLNRAGTPLLEIVTEPEMRSAAEAVAYAKALHALVVWLGICDGNMQEGSFRCDANVSVRPVGQEKFGTRAEIKNLNSFRFLEEAINYEVRRQIELIEDGGEVVQETRLYDPDKRETRSMRSKEDAHDYRYFPDPDLMPLVIGRDWVERVQAGMPELPAAMQQRFVEQYGVSAYDAGVLTSTKAMAAYFEAVVAKAGAANAKIAANWLMGDVSSQLNRDGIEIDAIPVSAAQLALLLQRIADGTISNKIAKEVFATMWEEKASDDGAADRIIEAKGLKQISDTGALEAIIDEVLAANAKSVEEFRAGKEKAFNALIGQAMKATKGKANPQQVNELLKKKLG.

Belongs to the GatB/GatE family. GatB subfamily. In terms of assembly, heterotrimer of A, B and C subunits.

It carries out the reaction L-glutamyl-tRNA(Gln) + L-glutamine + ATP + H2O = L-glutaminyl-tRNA(Gln) + L-glutamate + ADP + phosphate + H(+). It catalyses the reaction L-aspartyl-tRNA(Asn) + L-glutamine + ATP + H2O = L-asparaginyl-tRNA(Asn) + L-glutamate + ADP + phosphate + 2 H(+). In terms of biological role, allows the formation of correctly charged Asn-tRNA(Asn) or Gln-tRNA(Gln) through the transamidation of misacylated Asp-tRNA(Asn) or Glu-tRNA(Gln) in organisms which lack either or both of asparaginyl-tRNA or glutaminyl-tRNA synthetases. The reaction takes place in the presence of glutamine and ATP through an activated phospho-Asp-tRNA(Asn) or phospho-Glu-tRNA(Gln). The protein is Aspartyl/glutamyl-tRNA(Asn/Gln) amidotransferase subunit B of Burkholderia multivorans (strain ATCC 17616 / 249).